Consider the following 719-residue polypeptide: uncharacterized protein (719 aa).

Positions 64–100 (IQNLNQRKEEVIRLIAEQDKLTDNLKRKIEQSVKLQE) form a coiled coil. An S1 motif domain is found at 649-718 (GMELQGTVRN…QKGRVSLSMV (70 aa)).

This is an uncharacterized protein from Bacillus subtilis (strain 168).